The following is a 230-amino-acid chain: Cytidylate kinase (230 aa).

13–21 contributes to the ATP binding site; it reads GPAGTGKSS.

This sequence belongs to the cytidylate kinase family. Type 1 subfamily.

It localises to the cytoplasm. It catalyses the reaction CMP + ATP = CDP + ADP. It carries out the reaction dCMP + ATP = dCDP + ADP. In Mycobacterium tuberculosis (strain ATCC 25177 / H37Ra), this protein is Cytidylate kinase.